The chain runs to 634 residues: Phosphatase and actin regulator 2 (634 aa).

4 disordered regions span residues 1–32 (MDNAVDGLDKASIANSDGPTAGSQTPPFKRKG), 84–344 (LPDQ…PLED), 412–471 (PQLL…ALAS), and 485–508 (NRPSKKELEDKNILQRTSEEERQE). The N-myristoyl glycine moiety is linked to residue Asp2. Positions 13 to 26 (IANSDGPTAGSQTP) are enriched in polar residues. Ser16 is modified (phosphoserine). Phosphothreonine is present on Thr25. Residues 60 to 85 (AVLERKISTRQSREELIRRGVLKELP) form an RPEL 1 repeat. Basic and acidic residues-rich tracts occupy residues 108-120 (ESTREENVVKSEE) and 137-147 (EDKKENTENHS). Over residues 153 to 162 (PALPPSAPPK) the composition is skewed to pro residues. Low complexity-rich tracts occupy residues 231 to 247 (GSKASASPSTSSTSSRP) and 276 to 290 (TSHLSSDTTTSGTSD). A compositionally biased stretch (basic and acidic residues) spans 291 to 304 (LKGEPAETRVESFK). The span at 324-341 (VPPPPVAPAPSPLAPPLP) shows a compositional bias: pro residues. Ser423 bears the Phosphoserine mark. The span at 452–464 (TDDEDEDEDEDGS) shows a compositional bias: acidic residues. RPEL repeat units follow at residues 477-502 (DTLAIKLGNRPSKKELEDKNILQRTS), 515-540 (TKLVRRLSQRPTTEELEQRNILKQKN), and 553-578 (RRLSRKLSLRPTVAELQARRILRFNE). Positions 488-508 (SKKELEDKNILQRTSEEERQE) are enriched in basic and acidic residues. Residues Ser522 and Ser560 each carry the phosphoserine modification.

It belongs to the phosphatase and actin regulator family. Binds PPP1CA and actin.

The protein resides in the membrane. This Homo sapiens (Human) protein is Phosphatase and actin regulator 2 (PHACTR2).